Here is a 164-residue protein sequence, read N- to C-terminus: MSVVTGGGEAAGGGGGGGARVFFQSPRGGTGGSPGSSSSSGSSREDSAPVTTVAAAGQVQQQQRRHQQGKVTVKYDRKELRKRLVLEEWIVEQLGQLYGCEEEEMPDVEIDIDDLLDANSEEERASKLQEALVDCYKPTEEFIRELLSRIRGMRKLSPPQKKSV.

Gly residues predominate over residues 1-19 (MSVVTGGGEAAGGGGGGGA). Positions 1–70 (MSVVTGGGEA…QQQRRHQQGK (70 aa)) are disordered. At Ser2 the chain carries N-acetylserine. Ser25 is modified (phosphoserine). Arg27 bears the Omega-N-methylarginine mark. The residue at position 33 (Ser33) is a Phosphoserine. Over residues 50-62 (VTTVAAAGQVQQQ) the composition is skewed to low complexity. Phosphothreonine; by ILK1 is present on Thr72.

It belongs to the PP1 inhibitor family. The main inhibitory site appears to be Thr-72. Has over 600-fold higher inhibitory activity when phosphorylated, creating a molecular switch for regulating the phosphorylation status of PPP1CA substrates and smooth muscle contraction. Detected in heart, muscle, spinal cord, hippocampus, hypothalamus, thalamus, midbrain, brain stem, cerebellum, brain cortex and olfactory bulb.

Its subcellular location is the endomembrane system. In terms of biological role, inhibitor of the PP1 regulatory subunit PPP1CA. In Mus musculus (Mouse), this protein is Protein phosphatase 1 regulatory subunit 14C (Ppp1r14c).